The chain runs to 37 residues: Large ribosomal subunit protein bL36c (37 aa).

It belongs to the bacterial ribosomal protein bL36 family.

Its subcellular location is the plastid. It localises to the chloroplast. The protein is Large ribosomal subunit protein bL36c of Coffea arabica (Arabian coffee).